A 146-amino-acid polypeptide reads, in one-letter code: Endoribonuclease YbeY (146 aa).

His108, His112, and His118 together coordinate Zn(2+).

Belongs to the endoribonuclease YbeY family. Zn(2+) serves as cofactor.

It localises to the cytoplasm. Functionally, single strand-specific metallo-endoribonuclease involved in late-stage 70S ribosome quality control and in maturation of the 3' terminus of the 16S rRNA. This Aster yellows witches'-broom phytoplasma (strain AYWB) protein is Endoribonuclease YbeY.